The following is a 211-amino-acid chain: Beta-crystallin B3 (211 aa).

The tract at residues 1–21 (MTEQQSPPEQMVTGEGAGERG) is disordered. Positions 1-23 (MTEQQSPPEQMVTGEGAGERGGN) are N-terminal arm. Beta/gamma crystallin 'Greek key' domains follow at residues 24–63 (YKITIYELENFQGRRCELSEELPNVVDKALEKVGSIQVES) and 64–108 (GPWL…RPLQ). Residues 109–113 (IDSPD) are connecting peptide. Beta/gamma crystallin 'Greek key' domains are found at residues 114-155 (HKIH…RALN) and 156-198 (GTWV…RRVR). A C-terminal arm region spans residues 200–211 (QQWHQRGSFENS).

This sequence belongs to the beta/gamma-crystallin family. In terms of assembly, homo/heterodimer, or complexes of higher-order. The structure of beta-crystallin oligomers seems to be stabilized through interactions between the N-terminal arms.

Functionally, crystallins are the dominant structural components of the vertebrate eye lens. In Gallus gallus (Chicken), this protein is Beta-crystallin B3 (CRYBB3).